A 396-amino-acid chain; its full sequence is Deoxyuridine 5'-triphosphate nucleotidohydrolase (396 aa).

Substrate contacts are provided by residues 280–282 and 380–381; these read RSS and FG.

It belongs to the dUTPase family. The cofactor is Mg(2+).

The enzyme catalyses dUTP + H2O = dUMP + diphosphate + H(+). Functionally, involved in nucleotide metabolism: produces dUMP, the immediate precursor of thymidine nucleotides and decreases the intracellular concentration of dUTP to avoid uracil incorporation into viral DNA. This is Deoxyuridine 5'-triphosphate nucleotidohydrolase from Varicella-zoster virus (strain Dumas) (HHV-3).